A 432-amino-acid chain; its full sequence is Neuronal pentraxin-1 (432 aa).

Residues 1–22 (MLAGRAARTCALLALCLLGSRA) form the signal peptide. Positions 90–128 (ESQSTLDAGPGEARSGGGRKQPGSGKNTMGDLSRTPASE) are disordered. N-linked (GlcNAc...) asparagine glycans are attached at residues Asn154 and Asn193. The Pentraxin (PTX) domain occupies 226-428 (DKFQLTFPLR…GATKWTFEAC (203 aa)). A disulfide bridge connects residues Cys256 and Cys316. Ca(2+) is bound by residues Asn280, Glu358, Gln359, Asp360, and Gln370.

As to quaternary structure, homooligomer or heterooligomer (probably pentamer) with neuronal pentraxin receptor (NPTXR). Requires Ca(2+) as cofactor. Post-translationally, glycosylated. In terms of tissue distribution, cerebellum, hippocampus and cerebral cortex.

The protein localises to the secreted. It localises to the cytoplasmic vesicle. Its subcellular location is the secretory vesicle. The protein resides in the endoplasmic reticulum. May be involved in mediating uptake of synaptic material during synapse remodeling or in mediating the synaptic clustering of AMPA glutamate receptors at a subset of excitatory synapses. The polypeptide is Neuronal pentraxin-1 (Nptx1) (Rattus norvegicus (Rat)).